We begin with the raw amino-acid sequence, 150 residues long: Arginine repressor (150 aa).

Belongs to the ArgR family.

The protein localises to the cytoplasm. Its pathway is amino-acid biosynthesis; L-arginine biosynthesis [regulation]. Functionally, regulates arginine biosynthesis genes. The sequence is that of Arginine repressor from Clostridium beijerinckii (strain ATCC 51743 / NCIMB 8052) (Clostridium acetobutylicum).